The primary structure comprises 359 residues: Fructose-bisphosphate aldolase class 2 (359 aa).

S61 contacts D-glyceraldehyde 3-phosphate. Catalysis depends on D110, which acts as the Proton donor. Zn(2+)-binding residues include H111, D145, E175, and H227. Residue G228 participates in dihydroxyacetone phosphate binding. Position 265 (H265) interacts with Zn(2+). Residues 266-268 (GGS) and 287-290 (NIDT) contribute to the dihydroxyacetone phosphate site.

Belongs to the class II fructose-bisphosphate aldolase family. Zn(2+) serves as cofactor.

The enzyme catalyses beta-D-fructose 1,6-bisphosphate = D-glyceraldehyde 3-phosphate + dihydroxyacetone phosphate. It participates in carbohydrate degradation; glycolysis; D-glyceraldehyde 3-phosphate and glycerone phosphate from D-glucose: step 4/4. Its function is as follows. Catalyzes the aldol condensation of dihydroxyacetone phosphate (DHAP or glycerone-phosphate) with glyceraldehyde 3-phosphate (G3P) to form fructose 1,6-bisphosphate (FBP) in gluconeogenesis and the reverse reaction in glycolysis. This chain is Fructose-bisphosphate aldolase class 2 (fbaA), found in Buchnera aphidicola subsp. Schizaphis graminum (strain Sg).